Reading from the N-terminus, the 876-residue chain is Leucine--tRNA ligase (876 aa).

Positions 1-20 (MATERYNPRDAEPRWQQKWN) are disordered. The 'HIGH' region motif lies at 43–53 (PYPSGRIHMGH). The short motif at 632–636 (KMSKS) is the 'KMSKS' region element. K635 is an ATP binding site.

This sequence belongs to the class-I aminoacyl-tRNA synthetase family.

The protein localises to the cytoplasm. The catalysed reaction is tRNA(Leu) + L-leucine + ATP = L-leucyl-tRNA(Leu) + AMP + diphosphate. The polypeptide is Leucine--tRNA ligase (Rhizobium leguminosarum bv. trifolii (strain WSM2304)).